We begin with the raw amino-acid sequence, 334 residues long: E3 ubiquitin-protein ligase CIP8 (334 aa).

Residues 111–158 (LNSRNEIDDDEDEDEDDGDEEEEDEEENLTVNDEEDEEDDLRRRNRFP) are disordered. Positions 117–149 (IDDDEDEDEDDGDEEEEDEEENLTVNDEEDEED) are enriched in acidic residues. The RING-type; atypical zinc finger occupies 257–298 (CAVCKDGMVMGETGKKLPCGHCYHGDCIVPWLGTRNSCPVCR). Positions 307–334 (EYEEERKKRTSTVSDSAAASSSSSTSRY) are disordered. The span at 317–334 (STVSDSAAASSSSSTSRY) shows a compositional bias: low complexity.

Interacts with the RING finger of COP1. Interacts with UBC8 through its N-terminal region. As to expression, expressed in both light- and dark-grown seedlings.

It localises to the cytoplasm. It catalyses the reaction S-ubiquitinyl-[E2 ubiquitin-conjugating enzyme]-L-cysteine + [acceptor protein]-L-lysine = [E2 ubiquitin-conjugating enzyme]-L-cysteine + N(6)-ubiquitinyl-[acceptor protein]-L-lysine.. The protein operates within protein modification; protein ubiquitination. Its function is as follows. E3 ubiquitin-protein ligase that mediates ubiquitination and subsequent proteasomal degradation of target proteins. Probably forms a minimal ubiquitin ligase complex in cooperation with the E2 enzyme UBC8. Its interaction with COP1 suggests that it may participate in proteasome-mediated degradation of HY5 in vivo. This chain is E3 ubiquitin-protein ligase CIP8 (CIP8), found in Arabidopsis thaliana (Mouse-ear cress).